Here is a 319-residue protein sequence, read N- to C-terminus: UDP-N-acetylenolpyruvoylglucosamine reductase (319 aa).

Positions 35–198 (VGGPAEAMFK…TGCVLAGRPD (164 aa)) constitute an FAD-binding PCMH-type domain. Arginine 178 is an active-site residue. Serine 227 acts as the Proton donor in catalysis. Glutamate 302 is an active-site residue.

Belongs to the MurB family. FAD is required as a cofactor.

The protein localises to the cytoplasm. It catalyses the reaction UDP-N-acetyl-alpha-D-muramate + NADP(+) = UDP-N-acetyl-3-O-(1-carboxyvinyl)-alpha-D-glucosamine + NADPH + H(+). It functions in the pathway cell wall biogenesis; peptidoglycan biosynthesis. In terms of biological role, cell wall formation. The protein is UDP-N-acetylenolpyruvoylglucosamine reductase of Rhodospirillum rubrum (strain ATCC 11170 / ATH 1.1.1 / DSM 467 / LMG 4362 / NCIMB 8255 / S1).